The following is a 386-amino-acid chain: Histidine decarboxylase (386 aa).

Histidine 120 serves as a coordination point for substrate. Lysine 233 bears the N6-(pyridoxal phosphate)lysine mark.

Belongs to the group II decarboxylase family. In terms of assembly, homotetramer. Requires pyridoxal 5'-phosphate as cofactor.

The catalysed reaction is L-histidine + H(+) = histamine + CO2. The chain is Histidine decarboxylase from Vibrio campbellii (strain ATCC BAA-1116).